We begin with the raw amino-acid sequence, 170 residues long: ATP synthase subunit b (170 aa).

Residues 15–37 (FNLFETNILNWAVVVFGLYKFLP) traverse the membrane as a helical segment.

Belongs to the ATPase B chain family. As to quaternary structure, F-type ATPases have 2 components, F(1) - the catalytic core - and F(0) - the membrane proton channel. F(1) has five subunits: alpha(3), beta(3), gamma(1), delta(1), epsilon(1). F(0) has four main subunits: a(1), b(1), b'(1) and c(10-14). The alpha and beta chains form an alternating ring which encloses part of the gamma chain. F(1) is attached to F(0) by a central stalk formed by the gamma and epsilon chains, while a peripheral stalk is formed by the delta, b and b' chains.

Its subcellular location is the cellular thylakoid membrane. In terms of biological role, f(1)F(0) ATP synthase produces ATP from ADP in the presence of a proton or sodium gradient. F-type ATPases consist of two structural domains, F(1) containing the extramembraneous catalytic core and F(0) containing the membrane proton channel, linked together by a central stalk and a peripheral stalk. During catalysis, ATP synthesis in the catalytic domain of F(1) is coupled via a rotary mechanism of the central stalk subunits to proton translocation. Functionally, component of the F(0) channel, it forms part of the peripheral stalk, linking F(1) to F(0). The sequence is that of ATP synthase subunit b from Prochlorococcus marinus (strain MIT 9312).